The sequence spans 139 residues: GATA transcription factor 16 (139 aa).

The segment at Asn32 to Ser86 adopts a GATA-type zinc-finger fold. The segment at Asn67–Lys98 is disordered.

Belongs to the type IV zinc-finger family. Class B subfamily.

Its subcellular location is the nucleus. Transcriptional regulator that specifically binds 5'-GATA-3' or 5'-GAT-3' motifs within gene promoters. This is GATA transcription factor 16 (GATA16) from Arabidopsis thaliana (Mouse-ear cress).